The sequence spans 191 residues: dTTP/UTP pyrophosphatase (191 aa).

D71 acts as the Proton acceptor in catalysis.

This sequence belongs to the Maf family. YhdE subfamily. It depends on a divalent metal cation as a cofactor.

The protein resides in the cytoplasm. The catalysed reaction is dTTP + H2O = dTMP + diphosphate + H(+). It carries out the reaction UTP + H2O = UMP + diphosphate + H(+). Its function is as follows. Nucleoside triphosphate pyrophosphatase that hydrolyzes dTTP and UTP. May have a dual role in cell division arrest and in preventing the incorporation of modified nucleotides into cellular nucleic acids. The polypeptide is dTTP/UTP pyrophosphatase (Geobacter sulfurreducens (strain ATCC 51573 / DSM 12127 / PCA)).